The chain runs to 437 residues: Protein RecA (437 aa).

Glycine 69–threonine 76 contacts ATP. Residues histidine 343–glycine 437 are disordered. 3 stretches are compositionally biased toward polar residues: residues serine 350–proline 371, glycine 380–glycine 391, and leucine 400–proline 426.

Belongs to the RecA family.

It is found in the cytoplasm. Its function is as follows. Can catalyze the hydrolysis of ATP in the presence of single-stranded DNA, the ATP-dependent uptake of single-stranded DNA by duplex DNA, and the ATP-dependent hybridization of homologous single-stranded DNAs. It interacts with LexA causing its activation and leading to its autocatalytic cleavage. This is Protein RecA from Tropheryma whipplei (strain Twist) (Whipple's bacillus).